Reading from the N-terminus, the 155-residue chain is Ribosome maturation factor RimP (155 aa).

The protein belongs to the RimP family.

It is found in the cytoplasm. Its function is as follows. Required for maturation of 30S ribosomal subunits. The sequence is that of Ribosome maturation factor RimP from Prochlorococcus marinus (strain MIT 9312).